The chain runs to 151 residues: Small heat shock protein HspH (151 aa).

Residues 28-138 enclose the sHSP domain; the sequence is RAGEDNYPPY…KPRRIAINAA (111 aa).

The protein belongs to the small heat shock protein (HSP20) family.

The protein is Small heat shock protein HspH (hspH) of Bradyrhizobium diazoefficiens (strain JCM 10833 / BCRC 13528 / IAM 13628 / NBRC 14792 / USDA 110).